Reading from the N-terminus, the 809-residue chain is Leucine--tRNA ligase (809 aa).

The short motif at 40–51 (PYPSGQGLHVGH) is the 'HIGH' region element. The 'KMSKS' region signature appears at 581–585 (KMSKS). An ATP-binding site is contributed by lysine 584.

This sequence belongs to the class-I aminoacyl-tRNA synthetase family.

The protein localises to the cytoplasm. It carries out the reaction tRNA(Leu) + L-leucine + ATP = L-leucyl-tRNA(Leu) + AMP + diphosphate. This is Leucine--tRNA ligase from Levilactobacillus brevis (strain ATCC 367 / BCRC 12310 / CIP 105137 / JCM 1170 / LMG 11437 / NCIMB 947 / NCTC 947) (Lactobacillus brevis).